A 349-amino-acid polypeptide reads, in one-letter code: N-acetyltaurine hydrolase (349 aa).

Residues His26, His28, Glu169, His201, His230, and Asp298 each contribute to the a divalent metal cation site.

The protein belongs to the metallo-dependent hydrolases superfamily. Phosphotriesterase family. A divalent metal cation is required as a cofactor.

The protein resides in the cytoplasm. The protein localises to the cytosol. The enzyme catalyses N-acetyltaurine + H2O = taurine + acetate. The catalysed reaction is N-propanoyltaurine + H2O = propanoate + taurine. It carries out the reaction N-acetyl-L-methionine + H2O = L-methionine + acetate. It catalyses the reaction N-acetyl-L-isoleucine + H2O = L-isoleucine + acetate. The enzyme catalyses N-acetyl-L-leucine + H2O = L-leucine + acetate. The catalysed reaction is N-acetyl-L-valine + H2O = L-valine + acetate. N-acetyltaurine hydrolase that catalyzes the hydrolysis of N-acetyltaurine into taurine and acetate. PTER also acts on other N-acetyl amino acids (Met, Ile, Leu, Val) and N-propionyltaurine, but at lower rates. This Danio rerio (Zebrafish) protein is N-acetyltaurine hydrolase (pter).